The following is a 145-amino-acid chain: Class I hydrophobin rodE (145 aa).

4 disulfides stabilise this stretch: Cys-43–Cys-126, Cys-59–Cys-120, Cys-60–Cys-95, and Cys-127–Cys-140.

This sequence belongs to the fungal hydrophobin family. In terms of assembly, self-assembles to form functional amyloid fibrils called rodlets. Self-assembly into fibrillar rodlets occurs spontaneously at hydrophobic:hydrophilic interfaces and the rodlets further associate laterally to form amphipathic monolayers.

In terms of biological role, aerial growth, conidiation, and dispersal of filamentous fungi in the environment rely upon a capability of their secreting small amphipathic proteins called hydrophobins (HPBs) with low sequence identity. Class I can self-assemble into an outermost layer of rodlet bundles on aerial cell surfaces, conferring cellular hydrophobicity that supports fungal growth, development and dispersal; whereas Class II form highly ordered films at water-air interfaces through intermolecular interactions but contribute nothing to the rodlet structure. RodE is a class I hydrophobin that, unlike rodA, is not required for rodlet formation. The protein is Class I hydrophobin rodE of Aspergillus fumigatus (strain ATCC MYA-4609 / CBS 101355 / FGSC A1100 / Af293) (Neosartorya fumigata).